The chain runs to 342 residues: MAHIVTLNTPSREDWLTQLADVVTDPDELLRLLNIDAEEKLLAGRSAKKLFALRVPRSFIDRMEKGNPDDPLLRQVLTSQDEFVIAPGFSTDPLEEQHSVVPGLLHKYHNRALLLVKGGCAVNCRYCFRRHFPYAENQGNKRNWQTALEYVAAHPELDEMIFSGGDPLMAKDHELDWLLTQLEAIPHIKRLRIHSRLPIVIPARITEALVECFARSTLQILLVNHINHANEVDETFRQAMAKLRRVGVTLLNQSVLLRDVNDNAQTLANLSNALFDAGVMPYYLHVLDKVQGAAHFMVSDDEARQIMRELLTLVSGYLVPKLAREIGGEPSKTPLDLQLRQQ.

The region spanning 106-329 (HKYHNRALLL…PKLAREIGGE (224 aa)) is the Radical SAM core domain. Positions 120, 124, and 127 each coordinate [4Fe-4S] cluster. Lys332 carries the post-translational modification N6-(pyridoxal phosphate)lysine.

It belongs to the radical SAM superfamily. KamA family. It depends on [4Fe-4S] cluster as a cofactor. Requires pyridoxal 5'-phosphate as cofactor.

The enzyme catalyses L-lysine = D-beta-lysine. Functionally, with EpmA is involved in the beta-lysylation step of the post-translational modification of translation elongation factor P (EF-P) on 'Lys-34'. EpmB appears to act before EpmA. Displays lysine 2,3-aminomutase activity, producing (R)-beta-lysine from (S)-alpha-lysine (L-lysine). Cannot use (S)-ornithine or (R)-alpha-lysine as a substrate. This is L-lysine 2,3-aminomutase (epmB) from Escherichia coli (strain K12).